Consider the following 604-residue polypeptide: Integrin alpha-IIb (604 aa).

The stretch at Q1–S61 is one FG-GAP repeat. Residues Q1–R558 lie on the Extracellular side of the membrane. Ca(2+) contacts are provided by D22, D24, N26, Y28, and D30. Disulfide bonds link C69-C80 and C86-C141. N-linked (GlcNAc...) asparagine glycosylation occurs at N166. Intrachain disulfides connect C198–C204, C270–C283, C422–C486, and C476–C481. The N-linked (GlcNAc...) asparagine glycan is linked to N276. An N-linked (GlcNAc...) asparagine glycan is attached at N527. The helical transmembrane segment at A559–W584 threads the bilayer. The Cytoplasmic portion of the chain corresponds to K585–E604. The short motif at G587–R591 is the GFFKR motif element.

This sequence belongs to the integrin alpha chain family. As to quaternary structure, heterodimer of an alpha and a beta subunit. The alpha subunit is composed of a heavy and a light chain linked by a disulfide bond. Alpha-IIb associates with beta-3. Directly interacts with RNF181. Interacts (via C-terminus cytoplasmic tail region) with CIB1; the interaction is direct and calcium-dependent. Interacts (via C-terminus cytoplasmic tail region) with CIB2, CIB3 and CIB4; the interactions are stabilized/increased in a calcium and magnesium-dependent manner. ITGA2B:ITGB3 interacts with PPIA/CYPA; the interaction is ROS and PPIase activity-dependent and is increased in the presence of thrombin. ITGA2B:ITGB3 interacts with SELP (via C-type lectin domain); the interaction mediates cell-cell interaction and adhesion.

Its subcellular location is the membrane. Functionally, integrin alpha-IIb/beta-3 is a receptor for fibronectin, fibrinogen, plasminogen, prothrombin, thrombospondin and vitronectin. It recognizes the sequence R-G-D in a wide array of ligands. It recognizes the sequence H-H-L-G-G-G-A-K-Q-A-G-D-V in fibrinogen gamma chain. Following activation integrin alpha-IIb/beta-3 brings about platelet/platelet interaction through binding of soluble fibrinogen. This step leads to rapid platelet aggregation which physically plugs ruptured endothelial cell surface. In Papio cynocephalus (Yellow baboon), this protein is Integrin alpha-IIb (ITGA2B).